The following is a 344-amino-acid chain: Heat-inducible transcription repressor HrcA (344 aa).

Belongs to the HrcA family.

In terms of biological role, negative regulator of class I heat shock genes (grpE-dnaK-dnaJ and groELS operons). Prevents heat-shock induction of these operons. The sequence is that of Heat-inducible transcription repressor HrcA from Streptococcus agalactiae serotype III (strain NEM316).